A 118-amino-acid chain; its full sequence is Large ribosomal subunit protein bL17 (118 aa).

Belongs to the bacterial ribosomal protein bL17 family. Part of the 50S ribosomal subunit. Contacts protein L32.

This Campylobacter concisus (strain 13826) protein is Large ribosomal subunit protein bL17.